Consider the following 280-residue polypeptide: Type 1 encapsulin shell protein (280 aa).

This sequence belongs to the encapsulin family. Family 1 subfamily. In terms of assembly, this encapsulin nanocompartment is formed by 60 subunits; monomers form pentamers which assemble to form shells. There are 12 pores where the pentamers meet as well as 3-fold axis channels and dimer channels; none are larger than 3-4 Angstroms in diameter. The N-terminus of the protein is inside the shell, the C-terminus is outside.

The protein localises to the encapsulin nanocompartment. Its function is as follows. Shell component of a type 1 encapsulin nanocompartment. Assembles into proteinaceous icosahedral shells 24 nm in diameter in the presence and absence of its ferritin cargo protein. The center of cargo-loaded nanocompartments is loaded with iron. The empty encapsulin nanocompartment sequesters about 2200 Fe ions while the cargo-loaded nanocompartment can maximally sequester about 4150 Fe ions. Does not have any detectable ferroxidase activity. The polypeptide is Type 1 encapsulin shell protein (Rhodospirillum rubrum (strain ATCC 11170 / ATH 1.1.1 / DSM 467 / LMG 4362 / NCIMB 8255 / S1)).